The chain runs to 595 residues: Aspartate--tRNA(Asp/Asn) ligase (595 aa).

Glutamate 175 serves as a coordination point for L-aspartate. The tract at residues 199–202 is aspartate; that stretch reads QQYK. 2 residues coordinate L-aspartate: arginine 221 and histidine 454. 221-223 provides a ligand contact to ATP; sequence RDE. Glutamate 488 contacts ATP. Residue arginine 495 participates in L-aspartate binding. 540–543 serves as a coordination point for ATP; that stretch reads GIDR.

This sequence belongs to the class-II aminoacyl-tRNA synthetase family. Type 1 subfamily. In terms of assembly, homodimer.

It is found in the cytoplasm. It carries out the reaction tRNA(Asx) + L-aspartate + ATP = L-aspartyl-tRNA(Asx) + AMP + diphosphate. In terms of biological role, aspartyl-tRNA synthetase with relaxed tRNA specificity since it is able to aspartylate not only its cognate tRNA(Asp) but also tRNA(Asn). Reaction proceeds in two steps: L-aspartate is first activated by ATP to form Asp-AMP and then transferred to the acceptor end of tRNA(Asp/Asn). The polypeptide is Aspartate--tRNA(Asp/Asn) ligase (Rhizobium meliloti (strain 1021) (Ensifer meliloti)).